The chain runs to 515 residues: Maturase K (515 aa).

The protein belongs to the intron maturase 2 family. MatK subfamily.

It is found in the plastid. It localises to the chloroplast. In terms of biological role, usually encoded in the trnK tRNA gene intron. Probably assists in splicing its own and other chloroplast group II introns. The chain is Maturase K from Zingiber officinale (Ginger).